Reading from the N-terminus, the 162-residue chain is Peptidyl-prolyl cis-trans isomerase-like 1 (162 aa).

The region spanning 1-155 (MATDVAFDTS…DGVKILRARI (155 aa)) is the PPIase cyclophilin-type domain.

It belongs to the cyclophilin-type PPIase family. PPIL1 subfamily.

It catalyses the reaction [protein]-peptidylproline (omega=180) = [protein]-peptidylproline (omega=0). Its function is as follows. PPIases accelerate the folding of proteins. It catalyzes the cis-trans isomerization of proline imidic peptide bonds in oligopeptides. The polypeptide is Peptidyl-prolyl cis-trans isomerase-like 1 (cypC) (Aspergillus niger).